The following is an 86-amino-acid chain: uncharacterized protein (86 aa).

This is an uncharacterized protein from Dictyostelium discoideum (Social amoeba).